The following is an 869-amino-acid chain: MEEAAPCSEPAKTIKRIDRESVHRICSGQVVLSLGTAVKELVENSLDAGATNIDVRLKDHGAELIEVSDNGGGVEEENFEGLTLKHYTSKIQDFSDLIHVETFGFRGEALSSLCALSDVTISTCHKSAKVGTRLVFDHNGKITQKAPYPRQQGTTVSIQQLFHTLPVRHKEFQRNIKKEYAKMVQILQAYCIISKGVRINCTNQVGQGKKSPVVSTTGGPNLKENIGAVFGKKQLQSLIPFVQLPPNEAVCEEYGLKSTDLPEKLYSITGFISRCDHGVGRSTTDRQFFFINQRPCDPAKVVKLVNEVYHLYNKHQYPFIVLNICVDSECVDINVTPDKRQILLQEEKLLLAILKTSLIEMFGSDVNKLNVNQNLLDIVGNVKAPPGDAEKPWVEMSHHSETENPSSEGKRVMTLSRLRESFSLHQTESYFQSPKKVKQRHSSSKQLSLDTILSTVRTQKAVLSEDSESCHEMKSKMPVPRKYLRKVDDIDSGFCSTSESDAGYNTPEAGSCVISESVNNPIEEEFCSSEEQHQNEYLKTVGHSEKSLECDIQVLGTEHKLNRVNDCNNQTNLPQEATNSLPRVRRFKNEADDFKAGIHPKVENTRNYMPCVDVLVEVKKKTVPLEFSMKALAERVRKIVQQQQKCTETQNYRRFRAKISPGENKVAEDELRKEISKEMFAKMEIIGQFNLGFIIAKLNSDLFIIDQHATDEKYNFEMLQQHTVLQGQKLIAPQNLNLTAVNETVLIENLEIFRKNGFDFVINENAPVTQRVKLISLPTSKNWTFGPQDIDELIFMLSDCPGVMCRPSRVRQMFASRACRKSVMIGTALNVQEMKKLVTHMGEIEHPWNCPHGRPTMRHIASLDLIASE.

ATP contacts are provided by Asn-44, Asp-69, Glu-108, Ala-109, and Leu-110. Residues 585-588 (RRFK) carry the Nuclear localization signal motif.

Belongs to the DNA mismatch repair MutL/HexB family.

The protein resides in the nucleus. The enzyme catalyses ATP + H2O = ADP + phosphate + H(+). Its function is as follows. Component of the post-replicative DNA mismatch repair system (MMR). Involved in B cell growth by positively regulating B cell proliferation and controlling replication efficiency. Controls cell cycle to prevent re-replication and defects in DNA damage-induced G2 checkpoint. Doesn't seem to counteract or control the immunoglobulin gene conversion (Ig GC) and to contribute to guanine/uracil mismatch repair. Possesses an ATPase activity, but in the absence of gross structural changes, ATP hydrolysis may not be necessary for proficient mismatch repair. The protein is Mismatch repair endonuclease PMS2 of Gallus gallus (Chicken).